A 185-amino-acid chain; its full sequence is Probable nicotinate-nucleotide adenylyltransferase (185 aa).

Belongs to the NadD family.

It catalyses the reaction nicotinate beta-D-ribonucleotide + ATP + H(+) = deamido-NAD(+) + diphosphate. Its pathway is cofactor biosynthesis; NAD(+) biosynthesis; deamido-NAD(+) from nicotinate D-ribonucleotide: step 1/1. Its function is as follows. Catalyzes the reversible adenylation of nicotinate mononucleotide (NaMN) to nicotinic acid adenine dinucleotide (NaAD). The protein is Probable nicotinate-nucleotide adenylyltransferase of Methylorubrum extorquens (strain CM4 / NCIMB 13688) (Methylobacterium extorquens).